A 173-amino-acid polypeptide reads, in one-letter code: Alpha-crystallin A chain (173 aa).

Met-1 carries the N-acetylmethionine modification. The segment at 1-63 (MDIAIQHPWF…RTVLDSGISE (63 aa)) is required for complex formation with BFSP1 and BFSP2. At Gln-6 the chain carries Deamidated glutamine; partial. The residue at position 45 (Ser-45) is a Phosphoserine. Gln-50 is subject to Deamidated glutamine; partial. The 111-residue stretch at 52-162 (LFRTVLDSGI…GHSERAIPVS (111 aa)) folds into the sHSP domain. Residues Lys-70 and Lys-99 each carry the N6-acetyllysine modification. His-100 contacts Zn(2+). At Asn-101 the chain carries Deamidated asparagine; partial. Zn(2+)-binding residues include Glu-102 and His-107. Phosphoserine is present on Ser-122. A Deamidated asparagine; partial modification is found at Asn-123. The tract at residues 144-173 (PKVPSGVDAGHSERAIPVSREEKPSSAPSS) is disordered. Over residues 153–167 (GHSERAIPVSREEKP) the composition is skewed to basic and acidic residues. His-154 contacts Zn(2+). Ser-162 is a glycosylation site (O-linked (GlcNAc) serine).

This sequence belongs to the small heat shock protein (HSP20) family. In terms of assembly, heteromer composed of three CRYAA and one CRYAB subunits. Inter-subunit bridging via zinc ions enhances stability, which is crucial as there is no protein turn over in the lens. Can also form homodimers and homotetramers (dimers of dimers) which serve as the building blocks of homooligomers. Within homooligomers, the zinc-binding motif is created from residues of 3 different molecules. His-100 and Glu-102 from one molecule are ligands of the zinc ion, and His-107 and His-154 residues from additional molecules complete the site with tetrahedral coordination geometry. Part of a complex required for lens intermediate filament formation composed of BFSP1, BFSP2 and CRYAA. Post-translationally, acetylation at Lys-70 may increase chaperone activity. In terms of processing, undergoes age-dependent proteolytical cleavage at the C-terminus.

The protein resides in the cytoplasm. Its subcellular location is the nucleus. Its function is as follows. Contributes to the transparency and refractive index of the lens. Acts as a chaperone, preventing aggregation of various proteins under a wide range of stress conditions. Required for the correct formation of lens intermediate filaments as part of a complex composed of BFSP1, BFSP2 and CRYAA. The chain is Alpha-crystallin A chain (CRYAA) from Canis lupus familiaris (Dog).